The following is a 123-amino-acid chain: Alpha-lactalbumin (123 aa).

The 123-residue stretch at 1-123 (KQFTKCELSQ…KLEQWLCEEL (123 aa)) folds into the C-type lysozyme domain. 4 disulfide bridges follow: Cys-6–Cys-120, Cys-28–Cys-111, Cys-61–Cys-77, and Cys-73–Cys-91. Residues Lys-79, Asp-82, Asp-84, Asp-87, and Asp-88 each contribute to the Ca(2+) site.

It belongs to the glycosyl hydrolase 22 family. Lactose synthase (LS) is a heterodimer of a catalytic component, beta1,4-galactosyltransferase (beta4Gal-T1) and a regulatory component, alpha-lactalbumin (LA). Mammary gland specific. Secreted in milk.

Its subcellular location is the secreted. Functionally, regulatory subunit of lactose synthase, changes the substrate specificity of galactosyltransferase in the mammary gland making glucose a good acceptor substrate for this enzyme. This enables LS to synthesize lactose, the major carbohydrate component of milk. In other tissues, galactosyltransferase transfers galactose onto the N-acetylglucosamine of the oligosaccharide chains in glycoproteins. The protein is Alpha-lactalbumin (LALBA) of Equus asinus (Donkey).